A 492-amino-acid chain; its full sequence is MTDLTSLTLAEARDGLARKSFTALELTEAHLTAIEAARGLNAFVLETPEQARKMAQAADAQIATGDGGPLAGIPLGIKDLFATKDTRTTACSKILGDFHPPYESTVTTQLWRDGAVMVGKLNNDEFAMGSSNETSCFGPVVNPWRRAGSETKLVPGGSSGGSAAAVAAGLCLGATATDTGGSIRQPAAFTGTVGIKPTYGRCSRWGIVAFASSLDQAGPIARTVRDSAILLRSMAGHDPKDTTSVDRPVPNYETAIGASVKGMKIGIPKEYRLEGMPPEIERLWTQGAEWLKASGAELVEVSLPHTKYALPAYYIVAPAEASSNLARYDGVRYGARVNGRNIVEMYENTRAAGFGAEVKRRIMIGTYVLSAGYYDAYYLRAQKVRTLIKRDFEQCFDQGVSAILTPATPSAAFGIGEKGGADPVEMYLNDIFTVTVNMAGLPGIAVPAGADGQGLPLGLQLIGRPFDEETLFSLGEVIEQAAGRFTPKKWWA.

Residues lysine 78 and serine 158 each act as charge relay system in the active site. The active-site Acyl-ester intermediate is serine 182.

This sequence belongs to the amidase family. GatA subfamily. As to quaternary structure, heterotrimer of A, B and C subunits.

The catalysed reaction is L-glutamyl-tRNA(Gln) + L-glutamine + ATP + H2O = L-glutaminyl-tRNA(Gln) + L-glutamate + ADP + phosphate + H(+). In terms of biological role, allows the formation of correctly charged Gln-tRNA(Gln) through the transamidation of misacylated Glu-tRNA(Gln) in organisms which lack glutaminyl-tRNA synthetase. The reaction takes place in the presence of glutamine and ATP through an activated gamma-phospho-Glu-tRNA(Gln). This Rhodopseudomonas palustris (strain BisB5) protein is Glutamyl-tRNA(Gln) amidotransferase subunit A.